The chain runs to 246 residues: O-antigen export system ATP-binding protein RfbB (246 aa).

One can recognise an ABC transporter domain in the interval 22–246 (SGIKDLIFHP…IIELYKQAMA (225 aa)). ATP is bound at residue 63-70 (GRNGAGKS).

Belongs to the ABC transporter superfamily.

It is found in the cell inner membrane. Functionally, may form an ATP-driven O-antigen export apparatus, in association with RfbA. This Klebsiella pneumoniae protein is O-antigen export system ATP-binding protein RfbB (rfbB).